A 311-amino-acid polypeptide reads, in one-letter code: 4-diphosphocytidyl-2-C-methyl-D-erythritol kinase (311 aa).

The active site involves lysine 16. Position 100–110 (100–110 (PIGAGLAGGSS)) interacts with ATP. Aspartate 142 is a catalytic residue.

Belongs to the GHMP kinase family. IspE subfamily.

It carries out the reaction 4-CDP-2-C-methyl-D-erythritol + ATP = 4-CDP-2-C-methyl-D-erythritol 2-phosphate + ADP + H(+). The protein operates within isoprenoid biosynthesis; isopentenyl diphosphate biosynthesis via DXP pathway; isopentenyl diphosphate from 1-deoxy-D-xylulose 5-phosphate: step 3/6. In terms of biological role, catalyzes the phosphorylation of the position 2 hydroxy group of 4-diphosphocytidyl-2C-methyl-D-erythritol. The protein is 4-diphosphocytidyl-2-C-methyl-D-erythritol kinase of Prochlorococcus marinus (strain MIT 9312).